The following is a 175-amino-acid chain: Disulfide bond formation protein B 2 (175 aa).

Over 1–9 (MYLARTRFL) the chain is Cytoplasmic. Residues 10–26 (FFLASLACASIIGTAFY) traverse the membrane as a helical segment. Residues 27–44 (LQQTFGLDPCFLCLIQRA) lie on the Periplasmic side of the membrane. The cysteines at positions 36 and 39 are disulfide-linked. Residues 45 to 61 (AIIACGVLALCAACHAP) traverse the membrane as a helical segment. Topologically, residues 62–68 (GPTGMRR) are cytoplasmic. A helical transmembrane segment spans residues 69–85 (YSLGFLLIALTGLVTAG). The Periplasmic portion of the chain corresponds to 86–142 (AQVWLQTASADQLIPFITKLEHLLSLLSLDMCIDRLRSDAMFCAEITWTLFGISLPE). The chain crosses the membrane as a helical span at residues 143 to 161 (WSLLAFTGLALLPLYPLFS). At 162–175 (EFSHWLATKDRARY) the chain is on the cytoplasmic side.

Belongs to the DsbB family.

The protein localises to the cell inner membrane. Functionally, required for disulfide bond formation in some periplasmic proteins. Acts by oxidizing the DsbA protein. The polypeptide is Disulfide bond formation protein B 2 (Pseudomonas savastanoi pv. phaseolicola (strain 1448A / Race 6) (Pseudomonas syringae pv. phaseolicola (strain 1448A / Race 6))).